The following is an 83-amino-acid chain: Three-finger toxin W-IV (83 aa).

The first 21 residues, 1–21, serve as a signal peptide directing secretion; the sequence is MKTLLLTLVVVTIVCLDLGHT. 4 cysteine pairs are disulfide-bonded: Cys-24–Cys-45, Cys-38–Cys-62, Cys-64–Cys-75, and Cys-76–Cys-81.

Belongs to the three-finger toxin family. Short-chain subfamily. Type I alpha-neurotoxin sub-subfamily. Expressed by the venom gland.

The protein localises to the secreted. Functionally, binds to muscle nicotinic acetylcholine receptor (nAChR) and inhibit acetylcholine from binding to the receptor, thereby impairing neuromuscular transmission. This Walterinnesia aegyptia (Desert black snake) protein is Three-finger toxin W-IV.